A 411-amino-acid polypeptide reads, in one-letter code: Arginine deiminase (411 aa).

Catalysis depends on cysteine 401, which acts as the Amidino-cysteine intermediate.

This sequence belongs to the arginine deiminase family.

It is found in the cytoplasm. It carries out the reaction L-arginine + H2O = L-citrulline + NH4(+). It functions in the pathway amino-acid degradation; L-arginine degradation via ADI pathway; carbamoyl phosphate from L-arginine: step 1/2. This chain is Arginine deiminase, found in Staphylococcus epidermidis (strain ATCC 35984 / DSM 28319 / BCRC 17069 / CCUG 31568 / BM 3577 / RP62A).